Here is a 350-residue protein sequence, read N- to C-terminus: Very-long-chain 3-oxoacyl-CoA reductase (350 aa).

A helical membrane pass occupies residues 28–48; it reads SLVLLAGIGALSVGTFALRLV. NADP(+) is bound by residues Val-79, Asp-134, Asn-161, Lys-196, Tyr-228, Lys-232, Val-261, and Ser-263. Catalysis depends on Tyr-228, which acts as the Proton donor. The Lowers pKa of active site Tyr role is filled by Lys-232.

The protein belongs to the short-chain dehydrogenases/reductases (SDR) family.

The protein localises to the endoplasmic reticulum membrane. The enzyme catalyses a very-long-chain (3R)-3-hydroxyacyl-CoA + NADP(+) = a very-long-chain 3-oxoacyl-CoA + NADPH + H(+). It participates in lipid metabolism; fatty acid biosynthesis. Functionally, component of the microsomal membrane bound fatty acid elongation system, which produces the 26-carbon very long-chain fatty acids (VLCFA) from palmitate. Catalyzes the reduction of the 3-ketoacyl-CoA intermediate that is formed in each cycle of fatty acid elongation. VLCFAs serve as precursors for ceramide and sphingolipids. The sequence is that of Very-long-chain 3-oxoacyl-CoA reductase from Mycosarcoma maydis (Corn smut fungus).